A 316-amino-acid chain; its full sequence is UDP-N-acetylenolpyruvoylglucosamine reductase (316 aa).

An FAD-binding PCMH-type domain is found at 27–225 (VGGKAERFYR…KTAINALLKK (199 aa)). Residue R190 is part of the active site. Catalysis depends on S239, which acts as the Proton donor. Residue E309 is part of the active site.

It belongs to the MurB family. The cofactor is FAD.

It localises to the cytoplasm. It catalyses the reaction UDP-N-acetyl-alpha-D-muramate + NADP(+) = UDP-N-acetyl-3-O-(1-carboxyvinyl)-alpha-D-glucosamine + NADPH + H(+). It functions in the pathway cell wall biogenesis; peptidoglycan biosynthesis. Functionally, cell wall formation. In Coxiella burnetii (strain CbuG_Q212) (Coxiella burnetii (strain Q212)), this protein is UDP-N-acetylenolpyruvoylglucosamine reductase.